Here is a 421-residue protein sequence, read N- to C-terminus: Imidazolonepropionase (421 aa).

Fe(3+) contacts are provided by H81 and H83. Residues H81 and H83 each coordinate Zn(2+). 4-imidazolone-5-propanoate is bound by residues R90, Y153, and H186. Y153 is an N-formimidoyl-L-glutamate binding site. H251 contributes to the Fe(3+) binding site. Residue H251 coordinates Zn(2+). Residue E254 coordinates 4-imidazolone-5-propanoate. D326 is a binding site for Fe(3+). Zn(2+) is bound at residue D326. N-formimidoyl-L-glutamate is bound by residues N328 and G330. Residue S331 coordinates 4-imidazolone-5-propanoate.

This sequence belongs to the metallo-dependent hydrolases superfamily. HutI family. Requires Zn(2+) as cofactor. Fe(3+) is required as a cofactor.

It localises to the cytoplasm. The catalysed reaction is 4-imidazolone-5-propanoate + H2O = N-formimidoyl-L-glutamate. It participates in amino-acid degradation; L-histidine degradation into L-glutamate; N-formimidoyl-L-glutamate from L-histidine: step 3/3. Functionally, catalyzes the hydrolytic cleavage of the carbon-nitrogen bond in imidazolone-5-propanoate to yield N-formimidoyl-L-glutamate. It is the third step in the universal histidine degradation pathway. The polypeptide is Imidazolonepropionase (Streptococcus gordonii (strain Challis / ATCC 35105 / BCRC 15272 / CH1 / DL1 / V288)).